We begin with the raw amino-acid sequence, 237 residues long: Phosphoribosylaminoimidazole-succinocarboxamide synthase (237 aa).

Belongs to the SAICAR synthetase family.

It catalyses the reaction 5-amino-1-(5-phospho-D-ribosyl)imidazole-4-carboxylate + L-aspartate + ATP = (2S)-2-[5-amino-1-(5-phospho-beta-D-ribosyl)imidazole-4-carboxamido]succinate + ADP + phosphate + 2 H(+). The protein operates within purine metabolism; IMP biosynthesis via de novo pathway; 5-amino-1-(5-phospho-D-ribosyl)imidazole-4-carboxamide from 5-amino-1-(5-phospho-D-ribosyl)imidazole-4-carboxylate: step 1/2. This is Phosphoribosylaminoimidazole-succinocarboxamide synthase from Idiomarina loihiensis (strain ATCC BAA-735 / DSM 15497 / L2-TR).